The primary structure comprises 118 residues: Large ribosomal subunit protein bL20 (118 aa).

This sequence belongs to the bacterial ribosomal protein bL20 family.

Functionally, binds directly to 23S ribosomal RNA and is necessary for the in vitro assembly process of the 50S ribosomal subunit. It is not involved in the protein synthesizing functions of that subunit. The polypeptide is Large ribosomal subunit protein bL20 (Sodalis glossinidius (strain morsitans)).